A 190-amino-acid polypeptide reads, in one-letter code: UPF0340 protein BT9727_4999 (190 aa).

It belongs to the UPF0340 family.

The chain is UPF0340 protein BT9727_4999 from Bacillus thuringiensis subsp. konkukian (strain 97-27).